A 352-amino-acid polypeptide reads, in one-letter code: Invasion chromosome antigen T (352 aa).

It belongs to the IcaT/YfdF family.

Its subcellular location is the secreted. Its function is as follows. May contribute to pathogenesis, although some of its characteristics suggest it is a fossil gene. This is Invasion chromosome antigen T from Shigella flexneri serotype 5a (strain M90T).